We begin with the raw amino-acid sequence, 201 residues long: LexA repressor (201 aa).

Positions 29–49 form a DNA-binding region, H-T-H motif; sequence VREICKAVGLSSTSSVHFHLK. Catalysis depends on for autocatalytic cleavage activity residues Ser-125 and Lys-162.

This sequence belongs to the peptidase S24 family. In terms of assembly, homodimer.

The catalysed reaction is Hydrolysis of Ala-|-Gly bond in repressor LexA.. Its function is as follows. Represses a number of genes involved in the response to DNA damage (SOS response), including recA and lexA. In the presence of single-stranded DNA, RecA interacts with LexA causing an autocatalytic cleavage which disrupts the DNA-binding part of LexA, leading to derepression of the SOS regulon and eventually DNA repair. This is LexA repressor from Clostridium botulinum (strain ATCC 19397 / Type A).